Reading from the N-terminus, the 261-residue chain is Thiazole synthase (261 aa).

K98 functions as the Schiff-base intermediate with DXP in the catalytic mechanism. 1-deoxy-D-xylulose 5-phosphate contacts are provided by residues G159, 185-186 (AG), and 207-208 (AS).

The protein belongs to the ThiG family. As to quaternary structure, homotetramer. Forms heterodimers with either ThiH or ThiS.

The protein resides in the cytoplasm. The enzyme catalyses [ThiS sulfur-carrier protein]-C-terminal-Gly-aminoethanethioate + 2-iminoacetate + 1-deoxy-D-xylulose 5-phosphate = [ThiS sulfur-carrier protein]-C-terminal Gly-Gly + 2-[(2R,5Z)-2-carboxy-4-methylthiazol-5(2H)-ylidene]ethyl phosphate + 2 H2O + H(+). Its pathway is cofactor biosynthesis; thiamine diphosphate biosynthesis. Catalyzes the rearrangement of 1-deoxy-D-xylulose 5-phosphate (DXP) to produce the thiazole phosphate moiety of thiamine. Sulfur is provided by the thiocarboxylate moiety of the carrier protein ThiS. In vitro, sulfur can be provided by H(2)S. In Mycobacterium leprae (strain Br4923), this protein is Thiazole synthase.